The sequence spans 206 residues: RNA pyrophosphohydrolase (206 aa).

One can recognise a Nudix hydrolase domain in the interval 6-150 (GYRPNVGIVI…KRDVYRKVMK (145 aa)). The Nudix box signature appears at 38–59 (GGINEGENIETAMYRELYEEVG). Positions 162-191 (KPETVEKPRVERTEKRDFQKRDNQKREFRK) are enriched in basic and acidic residues. The disordered stretch occupies residues 162 to 206 (KPETVEKPRVERTEKRDFQKRDNQKREFRKSARTWNNSHQKGKAQ).

It belongs to the Nudix hydrolase family. RppH subfamily. It depends on a divalent metal cation as a cofactor.

Functionally, accelerates the degradation of transcripts by removing pyrophosphate from the 5'-end of triphosphorylated RNA, leading to a more labile monophosphorylated state that can stimulate subsequent ribonuclease cleavage. The protein is RNA pyrophosphohydrolase of Actinobacillus pleuropneumoniae serotype 3 (strain JL03).